Reading from the N-terminus, the 627-residue chain is CTP synthase (627 aa).

A Glutamine amidotransferase type-1 domain is found at 300–554 (CIAVVGKYTK…LASVDRLNQY (255 aa)). Catalysis depends on for GATase activity residues Cys-399, His-526, and Glu-528. Phosphoserine occurs at positions 567, 570, 571, and 588. Thr-595 bears the Phosphothreonine mark. Positions 599 to 613 (GISKSCNGSISTSDS) are enriched in polar residues. The segment at 599–627 (GISKSCNGSISTSDSEGACGGVDPTNGHK) is disordered.

This sequence belongs to the CTP synthase family. As to expression, in ovary, expressed in oocytes, follicle cells and nurse cells. Also expressed in larval and adult testis (at protein level). In larvae, expressed in lymph gland, salivary gland, regions of the midgut, testis, optical lobe and trachea. Isoform 1 is expressed in adult testis, ovary, accessory gland and head. Isoform 2 is weakly expressed in ovary.

The protein localises to the cytoplasm. The catalysed reaction is UTP + L-glutamine + ATP + H2O = CTP + L-glutamate + ADP + phosphate + 2 H(+). Its pathway is pyrimidine metabolism; CTP biosynthesis via de novo pathway; CTP from UDP: step 2/2. Functionally, catalyzes the ATP-dependent amination of UTP to CTP with either L-glutamine or ammonia as the source of nitrogen. Constitutes the rate-limiting enzyme in the synthesis of cytosine nucleotides. Its function is as follows. Required for assembly of cytoophidium in female germline cells. In nurse cells, CTPsyn filament assembly in the cytoophidium is regulated by Ack kinase which may thereby contribute to the control of CTP production at specific stages of oogenesis and development of the nurse cell membrane. In Drosophila melanogaster (Fruit fly), this protein is CTP synthase.